A 524-amino-acid polypeptide reads, in one-letter code: Serine/threonine-protein kinase PAK 2 (524 aa).

The disordered stretch occupies residues 1–81 (MSDNGELEDK…PEISPPSDFE (81 aa)). Residue Ser2 is modified to N-acetylserine. Residues Ser2, Ser20, Ser55, and Ser58 each carry the phosphoserine modification. The residue at position 60 (Thr60) is a Phosphothreonine. Lys62 is subject to N6-acetyllysine. A Phosphoserine modification is found at Ser64. Over residues 67–81 (KEKERPEISPPSDFE) the composition is skewed to basic and acidic residues. The segment at 69 to 112 (KERPEISPPSDFEHTIHVGFDAVTGEFTGMPEQWARLLQTSNIT) is GTPase-binding. The interval 69–137 (KERPEISPPS…KFYDSNTVKQ (69 aa)) is autoregulatory region. Positions 74–87 (ISPPSDFEHTIHVG) constitute a CRIB domain. Lys128 is subject to N6-acetyllysine. A Phosphothreonine modification is found at Thr134. Residue Tyr139 is modified to Phosphotyrosine. Ser141 bears the Phosphoserine mark. Positions 142 to 188 (FTPPEKDGFPSGTPALNTKGSETSAVVTEEDDDDEDAAPPVIAPRPD) are disordered. Thr143 is modified (phosphothreonine). Ser152 carries the post-translational modification Phosphoserine. A phosphothreonine mark is found at Thr154, Thr159, and Thr169. Residues 155 to 167 (PALNTKGSETSAV) are compositionally biased toward polar residues. Positions 169–178 (TEEDDDDEDA) are enriched in acidic residues. The residue at position 197 (Ser197) is a Phosphoserine. The segment at 204 to 228 (APVGDSNVDSGAKSSDKQKKKAKMT) is disordered. Residues 245–251 (PKKKYTR) carry the Nuclear localization signal motif. The Protein kinase domain maps to 249 to 499 (YTRYEKIGQG…SAKELLQHPF (251 aa)). Residues 255 to 263 (IGQGASGTV) and Lys278 each bind ATP. The active-site Proton acceptor is the Arg367. Thr402 bears the Phosphothreonine; by autocatalysis mark.

This sequence belongs to the protein kinase superfamily. STE Ser/Thr protein kinase family. STE20 subfamily. As to quaternary structure, interacts tightly with GTP-bound but not GDP-bound CDC42/p21 and RAC1. Interacts with SH3MD4. Interacts with SCRIB. Interacts with ARHGEF7 and GIT1. PAK-2p34 interacts with ARHGAP10. Interacts with RAC1. In terms of processing, full-length PAK2 is autophosphorylated when activated by CDC42/p21. Following cleavage, both peptides, PAK-2p27 and PAK-2p34, become highly autophosphorylated. Autophosphorylation of PAK-2p27 can occur in the absence of any effectors and is dependent on phosphorylation of Thr-402, because PAK-2p27 is acting as an exogenous substrate. During apoptosis proteolytically cleaved by caspase-3 or caspase-3-like proteases to yield active PAK-2p34. Post-translationally, ubiquitinated, leading to its proteasomal degradation.

Its subcellular location is the cytoplasm. The protein localises to the nucleus. It localises to the perinuclear region. It is found in the membrane. It catalyses the reaction L-seryl-[protein] + ATP = O-phospho-L-seryl-[protein] + ADP + H(+). The catalysed reaction is L-threonyl-[protein] + ATP = O-phospho-L-threonyl-[protein] + ADP + H(+). Its activity is regulated as follows. Activated by binding small G proteins. Binding of GTP-bound CDC42 or RAC1 to the autoregulatory region releases monomers from the autoinhibited dimer, enables phosphorylation of Thr-402 and allows the kinase domain to adopt an active structure. Following caspase cleavage, autophosphorylated PAK-2p34 is constitutively active. Serine/threonine protein kinase that plays a role in a variety of different signaling pathways including cytoskeleton regulation, cell motility, cell cycle progression, apoptosis or proliferation. Acts as a downstream effector of the small GTPases CDC42 and RAC1. Activation by the binding of active CDC42 and RAC1 results in a conformational change and a subsequent autophosphorylation on several serine and/or threonine residues. Full-length PAK2 stimulates cell survival and cell growth. Phosphorylates MAPK4 and MAPK6 and activates the downstream target MAPKAPK5, a regulator of F-actin polymerization and cell migration. Phosphorylates JUN and plays an important role in EGF-induced cell proliferation. Phosphorylates many other substrates including histone H4 to promote assembly of H3.3 and H4 into nucleosomes, BAD, ribosomal protein S6, or MBP. Phosphorylates CASP7, thereby preventing its activity. Additionally, associates with ARHGEF7 and GIT1 to perform kinase-independent functions such as spindle orientation control during mitosis. On the other hand, apoptotic stimuli such as DNA damage lead to caspase-mediated cleavage of PAK2, generating PAK-2p34, an active p34 fragment that translocates to the nucleus and promotes cellular apoptosis involving the JNK signaling pathway. Caspase-activated PAK2 phosphorylates MKNK1 and reduces cellular translation. This Mus musculus (Mouse) protein is Serine/threonine-protein kinase PAK 2 (Pak2).